Here is a 2151-residue protein sequence, read N- to C-terminus: RNA-directed RNA polymerase L (2151 aa).

5 residues coordinate Mn(2+): histidine 36, glutamate 54, aspartate 97, glutamate 110, and valine 111. The active-site For endonuclease activity is lysine 124. The region spanning 956–1142 (NGKFIRMKRK…SVNTEMWKSM (187 aa)) is the RdRp catalytic domain. Mg(2+) is bound at residue aspartate 1099.

It belongs to the Bunyavirales RNA polymerase family. In terms of assembly, interacts with the viral nucleoprotein. Mn(2+) is required as a cofactor. The cofactor is Mg(2+).

Its subcellular location is the host cytoplasm. It is found in the host perinuclear region. The enzyme catalyses RNA(n) + a ribonucleoside 5'-triphosphate = RNA(n+1) + diphosphate. In terms of biological role, RNA-dependent RNA polymerase, which is responsible for the replication and transcription of the viral RNA genome using antigenomic RNA as an intermediate. During transcription, synthesizes subgenomic RNAs and assures their capping by a cap-snatching mechanism, which involves the endonuclease activity cleaving the host capped pre-mRNAs. These short capped RNAs are then used as primers for viral transcription. Cleaves ssRNA substrates but not DNA. Seems to downregulate the expression of its own and heterologous mRNAs through its endonuclease activity. The chain is RNA-directed RNA polymerase L from Apodemus agrarius (Eurasian field mouse).